We begin with the raw amino-acid sequence, 88 residues long: Cell division topological specificity factor (88 aa).

Belongs to the MinE family.

Its function is as follows. Prevents the cell division inhibition by proteins MinC and MinD at internal division sites while permitting inhibition at polar sites. This ensures cell division at the proper site by restricting the formation of a division septum at the midpoint of the long axis of the cell. This chain is Cell division topological specificity factor, found in Escherichia fergusonii (strain ATCC 35469 / DSM 13698 / CCUG 18766 / IAM 14443 / JCM 21226 / LMG 7866 / NBRC 102419 / NCTC 12128 / CDC 0568-73).